A 419-amino-acid chain; its full sequence is MNDKPNKWIFIPILAILFVMIGYQYVCPAGGQACHFRTGDKLVRIAPLATPDPTTDDLYREQDPEEDNPPKCASKFNFTERDLTRDVDFNIKGDDVIVFLHIQKTGGTTFGRHLVRNIRLEQPCDCKAGQKKCTCHRPGKQESWLFSRFSTGWSCGLHADWTELTNCVPVIMDKRQPPKRKRNFYYITMLRDPVSRYLSEWKHVQRGATWKTSLHMCDGRSPTQDELPTCYNGDDWSGVTLHDFMDCPSNLANNRQVRMLADLSLVGCYNLSTMNESERNPILLASAKSNLKNMAFYGLTEFQRKTQYLFERTFHLRFISAFTQINSTRAANVELRDDMRSRIEQLNMLDMQLYEFAKDLFLQRYQFVRQRERQEERLKRREERRWIRERRVNQSKEPIVENQTRVTTTEDYASQVVRW.

Over 1-7 (MNDKPNK) the chain is Cytoplasmic. A helical; Signal-anchor for type II membrane protein transmembrane segment spans residues 8–28 (WIFIPILAILFVMIGYQYVCP). The Lumenal segment spans residues 29-419 (AGGQACHFRT…EDYASQVVRW (391 aa)). Residue asparagine 77 is glycosylated (N-linked (GlcNAc...) asparagine). 101–109 (HIQKTGGTT) is a binding site for 3'-phosphoadenylyl sulfate. Substrate-binding positions include 131–132 (KK), arginine 148, tryptophan 153, and histidine 158. Residue histidine 158 is the Proton acceptor of the active site. Residues arginine 191 and serine 199 each coordinate 3'-phosphoadenylyl sulfate. Substrate is bound by residues histidine 203 and tryptophan 210. N-linked (GlcNAc...) asparagine glycosylation is found at asparagine 270 and asparagine 275. 3'-phosphoadenylyl sulfate is bound at residue 323-325 (TQI). Asparagine 326 carries an N-linked (GlcNAc...) asparagine glycan. Residue 329-330 (RA) participates in 3'-phosphoadenylyl sulfate binding. 2 N-linked (GlcNAc...) asparagine glycosylation sites follow: asparagine 393 and asparagine 402.

This sequence belongs to the sulfotransferase 6 family. In early somitogenesis, expressed in presumptive forebrain and midbrain, tail bud and Kupffer's vesicle. During mid-somitogenesis, ubiquitous expression which is strongest in the somites and eye. During late somitogenesis, predominantly expressed in eye, hindbrain and ventral somites. At 24 hours post-fertilization (hpf), restricted to lens and neural retina, brain, otic vesicle and somites. At 36 hpf, brain expression is restricted to telencephalon. At 48 hpf, restricted to telencephalon and pectoral fin.

The protein localises to the membrane. The catalysed reaction is alpha-D-glucosaminyl-[heparan sulfate](n) + 3'-phosphoadenylyl sulfate = 6-sulfo-alpha-D-glucosaminyl-[heparan sulfate](n) + adenosine 3',5'-bisphosphate + H(+). Its function is as follows. 6-O-sulfation enzyme which catalyzes the transfer of sulfate from 3'-phosphoadenosine 5'-phosphosulfate (PAPS) to position 6 of the N-sulfoglucosamine residue (GlcNS) of heparan sulfate. The sequence is that of Heparan-sulfate 6-O-sulfotransferase 3-B from Danio rerio (Zebrafish).